The primary structure comprises 491 residues: Protein nucleotidyltransferase YdiU (491 aa).

Residues Gly94, Gly96, Arg97, Lys117, Asp129, Gly130, Arg180, and Arg187 each coordinate ATP. The Proton acceptor role is filled by Asp256. The Mg(2+) site is built by Asn257 and Asp266. ATP is bound at residue Asp266.

The protein belongs to the SELO family. The cofactor is Mg(2+). Mn(2+) is required as a cofactor.

It catalyses the reaction L-seryl-[protein] + ATP = 3-O-(5'-adenylyl)-L-seryl-[protein] + diphosphate. It carries out the reaction L-threonyl-[protein] + ATP = 3-O-(5'-adenylyl)-L-threonyl-[protein] + diphosphate. The catalysed reaction is L-tyrosyl-[protein] + ATP = O-(5'-adenylyl)-L-tyrosyl-[protein] + diphosphate. The enzyme catalyses L-histidyl-[protein] + UTP = N(tele)-(5'-uridylyl)-L-histidyl-[protein] + diphosphate. It catalyses the reaction L-seryl-[protein] + UTP = O-(5'-uridylyl)-L-seryl-[protein] + diphosphate. It carries out the reaction L-tyrosyl-[protein] + UTP = O-(5'-uridylyl)-L-tyrosyl-[protein] + diphosphate. In terms of biological role, nucleotidyltransferase involved in the post-translational modification of proteins. It can catalyze the addition of adenosine monophosphate (AMP) or uridine monophosphate (UMP) to a protein, resulting in modifications known as AMPylation and UMPylation. In Clostridium botulinum (strain ATCC 19397 / Type A), this protein is Protein nucleotidyltransferase YdiU.